The following is a 477-amino-acid chain: Protoporphyrinogen oxidase (477 aa).

FAD is bound by residues 9-14 (GGGISG), W42, 57-60 (GPRG), V257, A449, and 454-456 (VAV).

This sequence belongs to the protoporphyrinogen/coproporphyrinogen oxidase family. Protoporphyrinogen oxidase subfamily. In terms of assembly, monomer. Homodimer. FAD is required as a cofactor. As to expression, detected in liver (at protein level).

It is found in the mitochondrion inner membrane. It catalyses the reaction protoporphyrinogen IX + 3 O2 = protoporphyrin IX + 3 H2O2. The protein operates within porphyrin-containing compound metabolism; protoporphyrin-IX biosynthesis; protoporphyrin-IX from protoporphyrinogen-IX: step 1/1. In terms of biological role, catalyzes the 6-electron oxidation of protoporphyrinogen-IX to form protoporphyrin-IX. The polypeptide is Protoporphyrinogen oxidase (PPOX) (Bos taurus (Bovine)).